We begin with the raw amino-acid sequence, 270 residues long: MAVGVFDSGLGGLTVLDAVQRRLPEVPFVYFGDNAHAPYGVRDADDIFHLTCAATERLWAEGCDLVILACNTASAAALKRMQETWIPKDKRVLGVFVPLIEALTERQWGDNSPPREVAVKHVALFATPATVASRAFQRELAFRAIGVDVEAQPCGGVVDAIEQGDEILAEALVRSHVEALKRRMPHPQAAILGCTHYPLMEPIFQEALGPEVSVYSQANLVAESLADYLARKPEFAGDGTESKFLTTGDPRSVSNKATQFLRRRITFEAA.

Substrate contacts are provided by residues 7 to 8 (DS) and 39 to 40 (YG). Residue cysteine 70 is the Proton donor/acceptor of the active site. 71 to 72 (NT) contacts substrate. The Proton donor/acceptor role is filled by cysteine 194. Substrate is bound at residue 195-196 (TH).

The protein belongs to the aspartate/glutamate racemases family.

It catalyses the reaction L-glutamate = D-glutamate. Its pathway is cell wall biogenesis; peptidoglycan biosynthesis. In terms of biological role, provides the (R)-glutamate required for cell wall biosynthesis. The polypeptide is Glutamate racemase (Cereibacter sphaeroides (strain ATCC 17023 / DSM 158 / JCM 6121 / CCUG 31486 / LMG 2827 / NBRC 12203 / NCIMB 8253 / ATH 2.4.1.) (Rhodobacter sphaeroides)).